Reading from the N-terminus, the 155-residue chain is DNA gyrase inhibitor (155 aa).

The protein belongs to the DNA gyrase inhibitor family. Interacts with DNA gyrase.

It is found in the cytoplasm. Functionally, inhibits the supercoiling activity of DNA gyrase. Acts by inhibiting DNA gyrase at an early step, prior to (or at the step of) binding of DNA by the gyrase. It protects cells against toxins that target DNA gyrase, by inhibiting activity of these toxins and reducing the formation of lethal double-strand breaks in the cell. The sequence is that of DNA gyrase inhibitor from Citrobacter koseri (strain ATCC BAA-895 / CDC 4225-83 / SGSC4696).